Reading from the N-terminus, the 343-residue chain is Glycogen biosynthesis protein GlgD (343 aa).

It belongs to the bacterial/plant glucose-1-phosphate adenylyltransferase family.

Required for the synthesis of glycogen. The chain is Glycogen biosynthesis protein GlgD (glgD) from Geobacillus stearothermophilus (Bacillus stearothermophilus).